An 808-amino-acid chain; its full sequence is Probable phosphoketolase 1 (808 aa).

It belongs to the XFP family. It depends on thiamine diphosphate as a cofactor.

In Nostoc sp. (strain PCC 7120 / SAG 25.82 / UTEX 2576), this protein is Probable phosphoketolase 1.